The primary structure comprises 149 residues: Calmodulin-2 (149 aa).

EF-hand domains follow at residues 8-43, 44-79, 81-116, and 117-149; these read DQIS…LGQN, PTEA…KMKD, DSEE…LGEK, and LTDE…MMAK. Residues Asp-21, Asp-23, Asp-25, Cys-27, Glu-32, Asp-57, Asp-59, Asn-61, Thr-63, Glu-68, Asp-94, Asp-96, Asn-98, Glu-105, Asp-130, Asp-132, Asp-134, Gln-136, and Glu-141 each contribute to the Ca(2+) site.

Belongs to the calmodulin family. As to quaternary structure, interacts with KCBP and CIP111. Binds to IQD1 and IQD20.

It is found in the cytoplasm. It localises to the cytoskeleton. Calmodulin mediates the control of a large number of enzymes, ion channels and other proteins by Ca(2+). Among the enzymes to be stimulated by the calmodulin-Ca(2+) complex are a number of protein kinases and phosphatases. The sequence is that of Calmodulin-2 (CAM2) from Arabidopsis thaliana (Mouse-ear cress).